A 292-amino-acid chain; its full sequence is Homoserine kinase (292 aa).

84–94 (PLARGMGSSSA) lines the ATP pocket.

It belongs to the GHMP kinase family. Homoserine kinase subfamily.

Its subcellular location is the cytoplasm. The enzyme catalyses L-homoserine + ATP = O-phospho-L-homoserine + ADP + H(+). Its pathway is amino-acid biosynthesis; L-threonine biosynthesis; L-threonine from L-aspartate: step 4/5. Catalyzes the ATP-dependent phosphorylation of L-homoserine to L-homoserine phosphate. The sequence is that of Homoserine kinase from Campylobacter lari (strain RM2100 / D67 / ATCC BAA-1060).